The primary structure comprises 430 residues: Serine--tRNA ligase (430 aa).

237–239 contributes to the L-serine binding site; the sequence is TAE. ATP is bound at residue 268 to 270; that stretch reads RAE. Glu291 is an L-serine binding site. Position 355-358 (355-358) interacts with ATP; the sequence is EISS. Ser391 provides a ligand contact to L-serine.

The protein belongs to the class-II aminoacyl-tRNA synthetase family. Type-1 seryl-tRNA synthetase subfamily. In terms of assembly, homodimer. The tRNA molecule binds across the dimer.

The protein resides in the cytoplasm. It carries out the reaction tRNA(Ser) + L-serine + ATP = L-seryl-tRNA(Ser) + AMP + diphosphate + H(+). The catalysed reaction is tRNA(Sec) + L-serine + ATP = L-seryl-tRNA(Sec) + AMP + diphosphate + H(+). It participates in aminoacyl-tRNA biosynthesis; selenocysteinyl-tRNA(Sec) biosynthesis; L-seryl-tRNA(Sec) from L-serine and tRNA(Sec): step 1/1. Catalyzes the attachment of serine to tRNA(Ser). Is also able to aminoacylate tRNA(Sec) with serine, to form the misacylated tRNA L-seryl-tRNA(Sec), which will be further converted into selenocysteinyl-tRNA(Sec). The protein is Serine--tRNA ligase of Serratia proteamaculans (strain 568).